Reading from the N-terminus, the 414-residue chain is MSGGDKRQPEVNIGVVGHVDHGKTTLVQALTGVWTMRHSEEIRRGMTIKLGYADGEVWECEGCGFPERFSPEPVCECDPQASASLRRRVSYVDAPGHEILMATMLSGAALMDGALLVVAANEPCPQPQTKEHLVALEIIGIKNIVIVQNKVDVVSRERAKESYQEILNFIKGTIAEGSPIIPVSALKRANIDAVLAAIEKFIPTPPRDLDKPPVMYISRSFDVNRPGTPPERLVGGVVGGSIIQGVFRVGDEIEISPGVAVRKPGGRVEYVRLHTTITSLRFGSIEVEEARPGGLVAIGTQLDPSVTKADNLVGNVVGKPGELPEPLTTLRIEHHLLEKVVGMKEEARVEPIRRGEMLMLSVGTAITLGVVTRAGKDEIEVQLRRPVVTWPKARVALSRRIMGRWRLIGWGLIK.

One can recognise a tr-type G domain in the interval 8–206; it reads QPEVNIGVVG…AIEKFIPTPP (199 aa). Residues 17–24 are G1; that stretch reads GHVDHGKT. Residues aspartate 20, threonine 24, glycine 45, and threonine 47 each contribute to the Mg(2+) site. 20-25 serves as a coordination point for GTP; the sequence is DHGKTT. The tract at residues 45–49 is G2; sequence GMTIK. Residues cysteine 60, cysteine 63, cysteine 75, and cysteine 77 each coordinate Zn(2+). The segment at 93–96 is G3; it reads DAPG. Residues 149–152 and 184–186 contribute to the GTP site; these read NKVD and SAL. A G4 region spans residues 149 to 152; that stretch reads NKVD. The tract at residues 184–186 is G5; sequence SAL.

The protein belongs to the TRAFAC class translation factor GTPase superfamily. Classic translation factor GTPase family. EIF2G subfamily. In terms of assembly, heterotrimer composed of an alpha, a beta and a gamma chain. Mg(2+) serves as cofactor.

The enzyme catalyses GTP + H2O = GDP + phosphate + H(+). Functionally, eIF-2 functions in the early steps of protein synthesis by forming a ternary complex with GTP and initiator tRNA. The protein is Translation initiation factor 2 subunit gamma of Aeropyrum pernix (strain ATCC 700893 / DSM 11879 / JCM 9820 / NBRC 100138 / K1).